A 102-amino-acid polypeptide reads, in one-letter code: Cytochrome b (102 aa).

A run of 3 helical transmembrane segments spans residues 1-21 (FGSLLGVCLITQILTGLFLAM), 45-66 (WLIRNIHTNGASLFFICIYMHI), and 81-101 (WNIGVILFLMTMATAFMGYVF). Heme b is bound by residues H51 and H65.

This sequence belongs to the cytochrome b family. As to quaternary structure, the cytochrome bc1 complex contains 3 respiratory subunits (MT-CYB, CYC1 and UQCRFS1), 2 core proteins (UQCRC1 and UQCRC2) and probably 6 low-molecular weight proteins. Heme b is required as a cofactor.

Its subcellular location is the mitochondrion inner membrane. Component of the ubiquinol-cytochrome c reductase complex (complex III or cytochrome b-c1 complex) that is part of the mitochondrial respiratory chain. The b-c1 complex mediates electron transfer from ubiquinol to cytochrome c. Contributes to the generation of a proton gradient across the mitochondrial membrane that is then used for ATP synthesis. This chain is Cytochrome b (mt-cyb), found in Plethodon yonahlossee (Yonahlossee salamander).